An 81-amino-acid polypeptide reads, in one-letter code: ATP synthase subunit c, chloroplastic (81 aa).

2 helical membrane passes run Pro3–Gly23 and Leu57–Ala77.

Belongs to the ATPase C chain family. In terms of assembly, F-type ATPases have 2 components, F(1) - the catalytic core - and F(0) - the membrane proton channel. F(1) has five subunits: alpha(3), beta(3), gamma(1), delta(1), epsilon(1). F(0) has four main subunits: a(1), b(1), b'(1) and c(10-14). The alpha and beta chains form an alternating ring which encloses part of the gamma chain. F(1) is attached to F(0) by a central stalk formed by the gamma and epsilon chains, while a peripheral stalk is formed by the delta, b and b' chains.

The protein resides in the plastid. Its subcellular location is the chloroplast thylakoid membrane. F(1)F(0) ATP synthase produces ATP from ADP in the presence of a proton or sodium gradient. F-type ATPases consist of two structural domains, F(1) containing the extramembraneous catalytic core and F(0) containing the membrane proton channel, linked together by a central stalk and a peripheral stalk. During catalysis, ATP synthesis in the catalytic domain of F(1) is coupled via a rotary mechanism of the central stalk subunits to proton translocation. Its function is as follows. Key component of the F(0) channel; it plays a direct role in translocation across the membrane. A homomeric c-ring of between 10-14 subunits forms the central stalk rotor element with the F(1) delta and epsilon subunits. The polypeptide is ATP synthase subunit c, chloroplastic (Cycas taitungensis (Prince sago)).